The following is an 87-amino-acid chain: Small ribosomal subunit protein bS20 (87 aa).

The protein belongs to the bacterial ribosomal protein bS20 family.

Its function is as follows. Binds directly to 16S ribosomal RNA. The sequence is that of Small ribosomal subunit protein bS20 from Corynebacterium jeikeium (strain K411).